Consider the following 90-residue polypeptide: ATP synthase subunit c (90 aa).

Transmembrane regions (helical) follow at residues 17–37 (PLAY…AGVV) and 70–90 (LAIV…IIFV).

It belongs to the ATPase C chain family. F-type ATPases have 2 components, F(1) - the catalytic core - and F(0) - the membrane proton channel. F(1) has five subunits: alpha(3), beta(3), gamma(1), delta(1), epsilon(1). F(0) has three main subunits: a(1), b(2) and c(10-14). The alpha and beta chains form an alternating ring which encloses part of the gamma chain. F(1) is attached to F(0) by a central stalk formed by the gamma and epsilon chains, while a peripheral stalk is formed by the delta and b chains.

The protein localises to the cell membrane. Functionally, f(1)F(0) ATP synthase produces ATP from ADP in the presence of a proton or sodium gradient. F-type ATPases consist of two structural domains, F(1) containing the extramembraneous catalytic core and F(0) containing the membrane proton channel, linked together by a central stalk and a peripheral stalk. During catalysis, ATP synthesis in the catalytic domain of F(1) is coupled via a rotary mechanism of the central stalk subunits to proton translocation. Its function is as follows. Key component of the F(0) channel; it plays a direct role in translocation across the membrane. A homomeric c-ring of between 10-14 subunits forms the central stalk rotor element with the F(1) delta and epsilon subunits. This Metamycoplasma arthritidis (strain 158L3-1) (Mycoplasma arthritidis) protein is ATP synthase subunit c.